The sequence spans 395 residues: Cuticlin-5 (395 aa).

The signal sequence occupies residues methionine 1–glycine 18. Over glutamate 19–threonine 358 the chain is Extracellular. Residues serine 46–aspartate 291 form the ZP domain. Asparagine 90 and asparagine 307 each carry an N-linked (GlcNAc...) asparagine glycan. A helical membrane pass occupies residues leucine 359–cysteine 379. The Cytoplasmic segment spans residues cysteine 380–leucine 395.

The protein resides in the cell membrane. Plays a role in alae formation in L1 and dauer stage larvae. This is Cuticlin-5 from Caenorhabditis elegans.